Reading from the N-terminus, the 369-residue chain is Peptide chain release factor 2 (369 aa).

Gln-251 bears the N5-methylglutamine mark.

This sequence belongs to the prokaryotic/mitochondrial release factor family. Methylated by PrmC. Methylation increases the termination efficiency of RF2.

The protein localises to the cytoplasm. Peptide chain release factor 2 directs the termination of translation in response to the peptide chain termination codons UGA and UAA. The sequence is that of Peptide chain release factor 2 from Chlamydia trachomatis serovar A (strain ATCC VR-571B / DSM 19440 / HAR-13).